The following is a 533-amino-acid chain: MKKISLKTFRKSFNLSKSKDETEFMVVQPQSLAGDFVKDDSLFGSCYGKDMASCDIGSEDEKGKNRSKSESLMGTLKRRLSAKQKTKGKGGTASTDEDTFSSASAPGGLKDVRAPRPIRSTSLRSHHYSPTPWPLRPTSSEETCIKMEMRVKALVHAASPGPVNGVRKDLRELQPRELRDLQPEPRPESRCSPSSPGDLSLHLEEHVPVVIGLMSQDYLQYTVPLDDGMCPLEGPRSCCLDTSSPMEVSAVPLPGASGAFSEDDSHVDQDLVVGPEILVDSSVNNLLIGTTGVMLQSPRGGHDDAPPLSPLLPPMQNNPIQRNFSGLSGPDLHMAESVRCHLNFDPNSAPGVARVYDSVQSSGPMVVTSLTEELKKLAKQGWYWGPITRWEAEGKLANVPDGSFLVRDSSDDRYLLSLSFRSHGKTLHTRIEHSNGRFSFYEQPDVEGHTSIVDLIEHSIRDSENGAFCYSRSRLPGSATYPVRLTNPVSRFMQVRSLQYLCRFVIRQYTRIDLIQKLPLPNKMKDYLQEKHY.

2 disordered regions span residues 54–136 (CDIG…WPLR) and 177–199 (ELRD…PGDL). Residues 59–69 (EDEKGKNRSKS) show a composition bias toward basic and acidic residues. Over residues 76 to 88 (LKRRLSAKQKTKG) the composition is skewed to basic residues. The segment covering 177–189 (ELRDLQPEPRPES) has biased composition (basic and acidic residues). The SH2 domain occupies 382–489 (WYWGPITRWE…TYPVRLTNPV (108 aa)). Residues 484-533 (RLTNPVSRFMQVRSLQYLCRFVIRQYTRIDLIQKLPLPNKMKDYLQEKHY) enclose the SOCS box domain.

Interacts with KIT (phosphorylated). Interacts with RBCK1. Interacts with phosphorylated IRS4. Interacts with PIM3.

Its pathway is protein modification; protein ubiquitination. Functionally, SOCS family proteins form part of a classical negative feedback system that regulates cytokine signal transduction. May be a substrate recognition component of a SCF-like ECS (Elongin BC-CUL2/5-SOCS-box protein) E3 ubiquitin-protein ligase complex which mediates the ubiquitination and subsequent proteasomal degradation of target proteins. Regulates KIT degradation by ubiquitination of the tyrosine-phosphorylated receptor. This Mus musculus (Mouse) protein is Suppressor of cytokine signaling 6 (Socs6).